The following is a 204-amino-acid chain: Cytochrome c biogenesis ATP-binding export protein CcmA (204 aa).

Residues 2 to 202 enclose the ABC transporter domain; it reads LEIRNVTCIR…DSNELKKIRL (201 aa). Position 34 to 41 (34 to 41) interacts with ATP; that stretch reads GQNGAGKT.

Belongs to the ABC transporter superfamily. CcmA exporter (TC 3.A.1.107) family. In terms of assembly, the complex is composed of two ATP-binding proteins (CcmA) and two transmembrane proteins (CcmB).

It localises to the cell inner membrane. It carries out the reaction heme b(in) + ATP + H2O = heme b(out) + ADP + phosphate + H(+). In terms of biological role, part of the ABC transporter complex CcmAB involved in the biogenesis of c-type cytochromes; once thought to export heme, this seems not to be the case, but its exact role is uncertain. Responsible for energy coupling to the transport system. The sequence is that of Cytochrome c biogenesis ATP-binding export protein CcmA from Aliivibrio fischeri (strain ATCC 700601 / ES114) (Vibrio fischeri).